Here is a 62-residue protein sequence, read N- to C-terminus: MAKKAKGNRVQVILECTEHKDSGMPGTSRYITTKNRKNTTERLELKKYNPILKRVTVHKEIK.

It belongs to the bacterial ribosomal protein bL33 family.

The protein is Large ribosomal subunit protein bL33 of Bacteroides fragilis (strain ATCC 25285 / DSM 2151 / CCUG 4856 / JCM 11019 / LMG 10263 / NCTC 9343 / Onslow / VPI 2553 / EN-2).